Consider the following 232-residue polypeptide: MKTLVICSGGLDSVSLAHKMAAEHELTGLLSFDYGQRHKKELDFAQACAKRLGVPHQIIDIRTIGASLTGSALTDDVDVPDGHYAEETMKVTVVPNRNAIMLVIAFGVAAAQKADAVALAVHGGDHFIYPDCRPGFIEAFQTMQKHALDGYADVKLLAPYVHATKADIVADGAKYRTPFEATWSCYKGADRHCGRCGTCVERREAFHLAGIDDPTSYEDADFWRATTQKRNA.

ATP is bound at residue 7–17 (CSGGLDSVSLA). Residues Cys-185, Cys-193, Cys-196, and Cys-199 each coordinate Zn(2+).

It belongs to the QueC family. It depends on Zn(2+) as a cofactor.

The enzyme catalyses 7-carboxy-7-deazaguanine + NH4(+) + ATP = 7-cyano-7-deazaguanine + ADP + phosphate + H2O + H(+). It functions in the pathway purine metabolism; 7-cyano-7-deazaguanine biosynthesis. Catalyzes the ATP-dependent conversion of 7-carboxy-7-deazaguanine (CDG) to 7-cyano-7-deazaguanine (preQ(0)). This Brucella canis (strain ATCC 23365 / NCTC 10854 / RM-666) protein is 7-cyano-7-deazaguanine synthase.